Consider the following 307-residue polypeptide: Ribonuclease Z (307 aa).

Histidine 62, histidine 64, aspartate 66, histidine 67, histidine 139, aspartate 210, and histidine 268 together coordinate Zn(2+). Aspartate 66 serves as the catalytic Proton acceptor.

The protein belongs to the RNase Z family. In terms of assembly, homodimer. Zn(2+) serves as cofactor.

It carries out the reaction Endonucleolytic cleavage of RNA, removing extra 3' nucleotides from tRNA precursor, generating 3' termini of tRNAs. A 3'-hydroxy group is left at the tRNA terminus and a 5'-phosphoryl group is left at the trailer molecule.. Its function is as follows. Zinc phosphodiesterase, which displays some tRNA 3'-processing endonuclease activity. Probably involved in tRNA maturation, by removing a 3'-trailer from precursor tRNA. This is Ribonuclease Z from Myxococcus xanthus (strain DK1622).